A 277-amino-acid chain; its full sequence is Hydroxyethylthiazole kinase (277 aa).

Residue Met55 coordinates substrate. ATP contacts are provided by Arg130 and Ser176. Residue Gly203 participates in substrate binding.

The protein belongs to the Thz kinase family. Requires Mg(2+) as cofactor.

It catalyses the reaction 5-(2-hydroxyethyl)-4-methylthiazole + ATP = 4-methyl-5-(2-phosphooxyethyl)-thiazole + ADP + H(+). It participates in cofactor biosynthesis; thiamine diphosphate biosynthesis; 4-methyl-5-(2-phosphoethyl)-thiazole from 5-(2-hydroxyethyl)-4-methylthiazole: step 1/1. In terms of biological role, catalyzes the phosphorylation of the hydroxyl group of 4-methyl-5-beta-hydroxyethylthiazole (THZ). This Cutibacterium acnes (strain DSM 16379 / KPA171202) (Propionibacterium acnes) protein is Hydroxyethylthiazole kinase.